Consider the following 629-residue polypeptide: tRNA uridine 5-carboxymethylaminomethyl modification enzyme MnmG (629 aa).

Residue 14–19 (GAGHAG) participates in FAD binding. 274–288 (GPRYCPSIEDKVVRF) lines the NAD(+) pocket.

This sequence belongs to the MnmG family. Homodimer. Heterotetramer of two MnmE and two MnmG subunits. The cofactor is FAD.

It is found in the cytoplasm. NAD-binding protein involved in the addition of a carboxymethylaminomethyl (cmnm) group at the wobble position (U34) of certain tRNAs, forming tRNA-cmnm(5)s(2)U34. This Xylella fastidiosa (strain 9a5c) protein is tRNA uridine 5-carboxymethylaminomethyl modification enzyme MnmG.